We begin with the raw amino-acid sequence, 130 residues long: Small ribosomal subunit protein uS9 (130 aa).

Residues 109–130 (RMKERKKYGLKGARRAPQFSKR) are disordered. A compositionally biased stretch (basic residues) spans 111 to 130 (KERKKYGLKGARRAPQFSKR).

The protein belongs to the universal ribosomal protein uS9 family.

This is Small ribosomal subunit protein uS9 from Listeria innocua serovar 6a (strain ATCC BAA-680 / CLIP 11262).